The sequence spans 856 residues: Envelope glycoprotein gp160 (856 aa).

The N-terminal stretch at 1–32 is a signal peptide; that stretch reads MRVKEKYQHLRRWGWRWGTMLLGMLMICSATE. Over 33–684 the chain is Extracellular; it reads KLWVTVYYGV…ITNWLWYIKI (652 aa). Cys54 and Cys74 are joined by a disulfide. 18 N-linked (GlcNAc...) asparagine; by host glycosylation sites follow: Asn88, Asn136, Asn141, Asn156, Asn160, Asn186, Asn197, Asn230, Asn234, Asn241, Asn262, Asn276, Asn289, Asn295, Asn301, Asn332, Asn339, and Asn356. 5 disulfides stabilise this stretch: Cys119–Cys205, Cys126–Cys196, Cys131–Cys157, Cys218–Cys247, and Cys228–Cys239. The tract at residues 131-156 is V1; sequence CTDLKNDTNTNSSSGGMIMEKGEIKN. Residues 157–196 form a V2 region; sequence CSFNISTSIRGKVQKEYAFFYKHDIIPIDNDTTSYTLTSC. A V3 region spans residues 296–330; the sequence is CTRPNNNTRKRIRIQRGPGRTFVTIGKIGNMRQAH. Cys296 and Cys331 are disulfide-bonded. The segment at 364–374 is CD4-binding loop; that stretch reads SSGGDLEIVTH. 2 disulfide bridges follow: Cys378–Cys445 and Cys385–Cys418. The tract at residues 385–418 is V4; it reads CNSTQLFNSTWFNSTWSTEGSNNTEGSDTITLPC. Asn386, Asn392, Asn397, Asn406, Asn448, and Asn463 each carry an N-linked (GlcNAc...) asparagine; by host glycan. V5 stretches follow at residues 461-471 and 463-471; these read NNNGSEIFRPG and NGSEIFRPG. Residues 512 to 532 are fusion peptide; it reads AVGIGALFLGFLGAAGSTMGA. Positions 574 to 592 are immunosuppression; it reads KQLQARILAVERYLKDQQL. Cys598 and Cys604 are joined by a disulfide. Residues Asn611, Asn616, Asn624, Asn637, and Asn674 are each glycosylated (N-linked (GlcNAc...) asparagine; by host). Residues 633 to 667 are a coiled coil; the sequence is REINNYTSLIHSLIEESQNQQEKNEQELLELDKWA. The segment at 662–683 is MPER; binding to GalCer; the sequence is ELDKWASLWNWFNITNWLWYIK. A helical transmembrane segment spans residues 685-705; the sequence is FIMIVGGLVGLRIVFAVLSIV. Residues 706-856 lie on the Cytoplasmic side of the membrane; the sequence is NRVRQGHSPL…IRQGLERILL (151 aa). The segment at 715–742 is disordered; sequence LSFQTHLPTPGGPDRPEGIEEEGGERDR. S-palmitoyl cysteine; by host attachment occurs at residues Cys764 and Cys837. A Di-leucine internalization motif motif is present at residues 855–856; that stretch reads LL.

It belongs to the HIV-1 env protein family. As to quaternary structure, the mature envelope protein (Env) consists of a homotrimer of non-covalently associated gp120-gp41 heterodimers. The resulting complex protrudes from the virus surface as a spike. There seems to be as few as 10 spikes on the average virion. Interacts with host CD4, CCR5 and CXCR4. Gp120 also interacts with the C-type lectins CD209/DC-SIGN and CLEC4M/DC-SIGNR (collectively referred to as DC-SIGN(R)). Gp120 and gp41 interact with GalCer. Gp120 interacts with host ITGA4/ITGB7 complex; on CD4+ T-cells, this interaction results in rapid activation of integrin ITGAL/LFA-1, which facilitates efficient cell-to-cell spreading of HIV-1. Gp120 interacts with cell-associated heparan sulfate; this interaction increases virus infectivity on permissive cells and may be involved in infection of CD4- cells. The mature envelope protein (Env) consists of a homotrimer of non-covalently associated gp120-gp41 heterodimers. The resulting complex protrudes from the virus surface as a spike. There seems to be as few as 10 spikes on the average virion. Post-translationally, highly glycosylated by host. The high number of glycan on the protein is reffered to as 'glycan shield' because it contributes to hide protein sequence from adaptive immune system. Palmitoylation of the transmembrane protein and of Env polyprotein (prior to its proteolytic cleavage) is essential for their association with host cell membrane lipid rafts. Palmitoylation is therefore required for envelope trafficking to classical lipid rafts, but not for viral replication. In terms of processing, specific enzymatic cleavages in vivo yield mature proteins. Envelope glycoproteins are synthesized as an inactive precursor that is heavily N-glycosylated and processed likely by host cell furin in the Golgi to yield the mature SU and TM proteins. The cleavage site between SU and TM requires the minimal sequence [KR]-X-[KR]-R. About 2 of the 9 disulfide bonds of gp41 are reduced by P4HB/PDI, following binding to CD4 receptor.

The protein localises to the virion membrane. The protein resides in the host cell membrane. It is found in the host endosome membrane. Functionally, oligomerizes in the host endoplasmic reticulum into predominantly trimers. In a second time, gp160 transits in the host Golgi, where glycosylation is completed. The precursor is then proteolytically cleaved in the trans-Golgi and thereby activated by cellular furin or furin-like proteases to produce gp120 and gp41. Attaches the virus to the host lymphoid cell by binding to the primary receptor CD4. This interaction induces a structural rearrangement creating a high affinity binding site for a chemokine coreceptor like CXCR4 and/or CCR5. Acts as a ligand for CD209/DC-SIGN and CLEC4M/DC-SIGNR, which are respectively found on dendritic cells (DCs), and on endothelial cells of liver sinusoids and lymph node sinuses. These interactions allow capture of viral particles at mucosal surfaces by these cells and subsequent transmission to permissive cells. HIV subverts the migration properties of dendritic cells to gain access to CD4+ T-cells in lymph nodes. Virus transmission to permissive T-cells occurs either in trans (without DCs infection, through viral capture and transmission), or in cis (following DCs productive infection, through the usual CD4-gp120 interaction), thereby inducing a robust infection. In trans infection, bound virions remain infectious over days and it is proposed that they are not degraded, but protected in non-lysosomal acidic organelles within the DCs close to the cell membrane thus contributing to the viral infectious potential during DCs' migration from the periphery to the lymphoid tissues. On arrival at lymphoid tissues, intact virions recycle back to DCs' cell surface allowing virus transmission to CD4+ T-cells. In terms of biological role, acts as a class I viral fusion protein. Under the current model, the protein has at least 3 conformational states: pre-fusion native state, pre-hairpin intermediate state, and post-fusion hairpin state. During fusion of viral and target intracellular membranes, the coiled coil regions (heptad repeats) assume a trimer-of-hairpins structure, positioning the fusion peptide in close proximity to the C-terminal region of the ectodomain. The formation of this structure appears to drive apposition and subsequent fusion of viral and target cell membranes. Complete fusion occurs in host cell endosomes and is dynamin-dependent, however some lipid transfer might occur at the plasma membrane. The virus undergoes clathrin-dependent internalization long before endosomal fusion, thus minimizing the surface exposure of conserved viral epitopes during fusion and reducing the efficacy of inhibitors targeting these epitopes. Membranes fusion leads to delivery of the nucleocapsid into the cytoplasm. The sequence is that of Envelope glycoprotein gp160 from Homo sapiens (Human).